Here is a 2108-residue protein sequence, read N- to C-terminus: Mucin-5B (2108 aa).

A signal peptide spans M1–G21. One can recognise a VWFD 1 domain in the interval S36–P203. 2 cysteine pairs are disulfide-bonded: C38/C166 and C60/C202. A disordered region spans residues E196–D219. In terms of domain architecture, TIL 1 spans C304–C360. An N-linked (GlcNAc...) (complex) asparagine glycan is attached at N381. The region spanning G398 to F570 is the VWFD 2 domain. Intrachain disulfides connect C400/C534, C422/C569, and C443/C451. N-linked (GlcNAc...) (complex) asparagine glycans are attached at residues N528, N599, N680, and N772. The TIL 2 domain occupies C666–C723. A TIL 3 domain is found at G782–C825. The VWFC 1 domain occupies C825–P897. N855 carries N-linked (GlcNAc...) (complex) asparagine glycosylation. The VWFD 3 domain maps to G863–S1033. Cystine bridges form between C865–C997, C887–C1032, C896–C994, and C914–C921. N-linked (GlcNAc...) (complex) asparagine glycans are attached at residues N1036, N1219, N1371, and N1452. The VWFD 4 domain maps to C1429–N1613. 3 disulfides stabilise this stretch: C1431/C1573, C1453/C1612, and C1477/C1485. N1567, N1639, N1792, N1807, and N1841 each carry an N-linked (GlcNAc...) (complex) asparagine glycan. One can recognise a VWFC 2 domain in the interval C1761 to E1832. A VWFC 3 domain is found at G1870–Q1937. N-linked (GlcNAc...) (complex) asparagine glycosylation is present at N1964. 4 cysteine pairs are disulfide-bonded: C2010–C2066, C2031–C2080, C2042–C2096, and C2046–C2098. The 95-residue stretch at C2010–P2104 folds into the CTCK domain.

Homomultimer; disulfide-linked. The N- and C-terminus mediate their assembly into higher order structures to form filaments. The CTCK domains of two polypeptides associate in the endoplasmic reticulum to generate intermolecularly disulfide-bonded dimers. These dimers progress to the Golgi apparatus, which is a more acidic environment than the endoplasmic reticulum. Under acidic conditions, the N-termini form non-covalent intermolecular interactions that juxtapose assemblies from different CTCK-linked dimers to produce long, disulfide-linked polymers that remain highly compact until secretion. N-glycosylated. Complex glycosylation with bisecting N-acetylglucosamine. Contains mainly N-acetylglucosamine (3.1-8.5%), mannose (2.9-4.6%), a small amount of galactose (1.1-4.35) and sialic acid (0.3-1.3%). Most abundant glycan is composed of a GlcNAc(2)Man(3) core, a bisecting GlcNAc and another 3 GlcNAc antannae located on the mannoses of the core. Site Asn-1639 exists both in glycosylated and non-glycosylated forms.

The protein resides in the secreted. Its function is as follows. Ovomucin, the glycoprotein responsible for the gel properties of egg white, is composed for 2 subunits, alpha-ovomucin/MUC5B and beta-ovomucin/MUC6. The polypeptide is Mucin-5B (MUC5B) (Gallus gallus (Chicken)).